The primary structure comprises 198 residues: Na(+)-translocating NADH-quinone reductase subunit E (198 aa).

Helical transmembrane passes span 11 to 31, 39 to 59, 77 to 97, 110 to 130, 140 to 160, and 176 to 196; these read SIFI…FLAV, MGLG…NNLI, FLSF…LEMA, GIFL…SFMV, VVYG…MAGI, and LGIT…FSGI.

Belongs to the NqrDE/RnfAE family. In terms of assembly, composed of six subunits; NqrA, NqrB, NqrC, NqrD, NqrE and NqrF.

The protein localises to the cell inner membrane. It carries out the reaction a ubiquinone + n Na(+)(in) + NADH + H(+) = a ubiquinol + n Na(+)(out) + NAD(+). Its function is as follows. NQR complex catalyzes the reduction of ubiquinone-1 to ubiquinol by two successive reactions, coupled with the transport of Na(+) ions from the cytoplasm to the periplasm. NqrA to NqrE are probably involved in the second step, the conversion of ubisemiquinone to ubiquinol. The protein is Na(+)-translocating NADH-quinone reductase subunit E of Aeromonas salmonicida (strain A449).